The chain runs to 331 residues: Protein REVEILLE 6 (331 aa).

The 55-residue stretch at 67–121 folds into the HTH myb-type domain; it reads TITKSRESWTEPEHDKFLEALQLFDRDWKKIEAFIGSKTVIQIRSHAQKYFLKVQ. The H-T-H motif DNA-binding region spans 94-117; sequence WKKIEAFIGSKTVIQIRSHAQKYF. Disordered stretches follow at residues 122–166, 203–237, and 309–331; these read KSGT…EPND, LPKA…GNVG, and SETA…EIST. Polar residues predominate over residues 150 to 165; sequence VQLQVPGSFKSTSEPN. Low complexity predominate over residues 211–220; the sequence is NNNCSSSSEN. Basic and acidic residues-rich tracts occupy residues 226-235 and 322-331; these read SNRDARDHGN and LNKDPPEIST.

The protein resides in the nucleus. Its function is as follows. Probable transcription factor. RVE4, RVE6 and RVE8 are components of the circadian system acting synergistically to regulate flowering time, redundantly to regulate leaf growth, and antagonistically to regulate hypocotyl elongation; their action seems independent of ZTL and HY5. In Arabidopsis thaliana (Mouse-ear cress), this protein is Protein REVEILLE 6.